A 502-amino-acid chain; its full sequence is Protein krueppel (502 aa).

Disordered regions lie at residues 115–164 and 178–202; these read PPQG…KLSV and DMYH…THDG. Composition is skewed to low complexity over residues 119-136 and 183-198; these read THLH…STPL and SGGP…SPNS. 5 consecutive C2H2-type zinc fingers follow at residues 222–244, 250–272, 278–300, 306–328, and 334–354; these read FTCK…ERTH, FECP…MRLH, YHCS…LRVH, YTCE…MLVH, and FECE…NHKC. Disordered regions lie at residues 399–427 and 445–502; these read NESV…SVDG and RLPP…HQQH. Acidic residues predominate over residues 410–419; sequence EDDGPLDLSE. Ser-468, Ser-471, and Ser-477 each carry phosphoserine. Residues 482 to 491 show a composition bias toward acidic residues; the sequence is DDIDLYDLDD.

It belongs to the krueppel C2H2-type zinc-finger protein family.

It localises to the nucleus. In terms of biological role, krueppel is a gap class segmentation protein. It is involved in the segmentation of the embryo and in the differentiation of the Malpighian tubules. This Drosophila melanogaster (Fruit fly) protein is Protein krueppel (Kr).